The sequence spans 546 residues: Tegument protein UL21 homolog (546 aa).

It belongs to the alphaherpesvirinae HHV-1 UL21 protein family.

It is found in the virion tegument. The protein localises to the host cytoplasm. The protein resides in the host nucleus. Its function is as follows. May facilitate the viral transport through neural circuits. The polypeptide is Tegument protein UL21 homolog (MDV033) (Gallus gallus (Chicken)).